Consider the following 294-residue polypeptide: S-adenosylmethionine uptake transporter (294 aa).

The next 10 membrane-spanning stretches (helical) occupy residues 4 to 24 (ALKT…TSSI), 41 to 61 (VAFF…VYYG), 74 to 91 (VLRG…TYGL), 98 to 118 (TATV…VFIL), 121 to 141 (NIIW…VVML), 148 to 168 (FNPE…LDII), 178 to 198 (MLSM…PVAM), 207 to 227 (FELA…FFLL), 237 to 257 (ATAP…YFIF), and 260 to 280 (FPDK…LFII). EamA domains lie at 22–141 (SSIN…VVML) and 160–280 (ISFA…LFII).

The protein belongs to the drug/metabolite transporter (DMT) superfamily. 10 TMS drug/metabolite exporter (DME) (TC 2.A.7.3) family.

It is found in the cell inner membrane. With respect to regulation, transport is inhibited by S-adenosylethionine and to a lesser extent by S-adenosylhomocysteine. Unlike eukaryotic transporters is not inhibited by sinfungin. Also inhibited by 2.4-dinitrophenol, suggesting transport is an energy-dependent process. Transports S-adenosylmethionine. The sequence is that of S-adenosylmethionine uptake transporter (sam) from Rickettsia prowazekii (strain Madrid E).